Here is a 728-residue protein sequence, read N- to C-terminus: Rho-related BTB domain-containing protein 2 (728 aa).

Residues 1 to 210 form a rho-like region; that stretch reads MDSDMDYERP…DNAIRAALIS (210 aa). GTP is bound by residues 21 to 28, 84 to 88, and 140 to 143; these read GDNAVGKT, DTFGD, and CQLD. BTB domains follow at residues 266–333 and 500–567; these read ADVI…HHHH and SDVT…TSSP. The segment covering 304-313 has biased composition (gly residues); that stretch reads ELGGPSGSGG. The segment at 304–333 is disordered; that stretch reads ELGGPSGSGGPRPEDHRSHPEQHHHHHHHH. The segment covering 315-324 has biased composition (basic and acidic residues); that stretch reads RPEDHRSHPE. Positions 703–728 are disordered; it reads FWNSPSSPSSSAAGSASPSSSSSAVV. Residues 706 to 728 are compositionally biased toward low complexity; sequence SPSSPSSSAAGSASPSSSSSAVV.

The protein belongs to the small GTPase superfamily. Rho family. As to quaternary structure, interacts with HSP90AA1 and HSP90AB1. Forms a complex with CUL3 and RBX1. Interacts (via BTB 1 domain) with CUL3. Interacts with MSI2. Post-translationally, autoubiquitinated by RHOBTB2-CUL3-RBX1 ubiquitin ligase complex. Expressed in most tissues, with highest expression in brain.

Regulator of cell proliferation and apoptosis. It likely functions as a substrate-adapter that recruits key substrates, e.g. MSI2, to CUL3-based ubiquitin ligase complexes for degradation. Required for MSI2 ubiquitination and degradation. In Mus musculus (Mouse), this protein is Rho-related BTB domain-containing protein 2 (Rhobtb2).